We begin with the raw amino-acid sequence, 284 residues long: MKQKVVSIGDIKVANDLPFVLFGGMNVLESRDLAMRICEHYVTVTQKLGIPYVFKASFDKANRSSIHSYRGPGLEEGMKIFQELKQQFGVKVITDVHEISQCQPVAEVVDVIQLPAFLARQTDLVEAMARTGAVINVKKPQFVSPGQMGNIVEKFKEAGNDQVILCDRGSNFGYDNLVVDMLGINVMVKATGGHPVIFDVTHALQCRDPFGSASGGRRAQVAELARAGMAVGLAGLFIEAHPEPNSAKCDGPSALPLDKLEPFLMQMKAIDDLVKSFPELDTSK.

It belongs to the KdsA family.

It is found in the cytoplasm. It catalyses the reaction D-arabinose 5-phosphate + phosphoenolpyruvate + H2O = 3-deoxy-alpha-D-manno-2-octulosonate-8-phosphate + phosphate. Its pathway is carbohydrate biosynthesis; 3-deoxy-D-manno-octulosonate biosynthesis; 3-deoxy-D-manno-octulosonate from D-ribulose 5-phosphate: step 2/3. It participates in bacterial outer membrane biogenesis; lipopolysaccharide biosynthesis. The sequence is that of 2-dehydro-3-deoxyphosphooctonate aldolase from Yersinia enterocolitica serotype O:8 / biotype 1B (strain NCTC 13174 / 8081).